A 299-amino-acid chain; its full sequence is Prohibitin-2 (299 aa).

An N-acetylalanine modification is found at A2. Residues 19 to 49 (MGTALKLLLGAGAVAYGVRESVFTVEGGHRA) are necessary for transcriptional repression. The residue at position 128 (Y128) is a Phosphotyrosine. K147 carries the post-translational modification N6-acetyllysine. Positions 150–174 (ASQLITQRAQVSLLIRRELTERAKD) are necessary for transcriptional repression. The residue at position 151 (S151) is a Phosphoserine. The stretch at 190-238 (SREYTAAVEAKQVAQQEAQRAQFLVEKAKQEQRQKIVQAEGEAEAAKML) forms a coiled coil. N6-acetyllysine is present on residues K200, K236, K250, and K262.

It belongs to the prohibitin family. As to quaternary structure, the mitochondrial prohibitin complex consists of two subunits (PHB1 and PHB2), assembled into a membrane-associated ring-shaped supercomplex of approximately 1 mDa. Interacts with ESR1, HDAC1 and HDAC5. Interacts with ZNF703. Interacts with STOML2. Interacts with ARFGEF3. Interacts with SPHK2. Interacts with COX4I1; the interaction associates PHB2 with COX. Interacts with MAP1LC3B (membrane-bound form LC3-II); the interaction is direct and upon mitochondrial depolarization and proteasome-dependent outer membrane rupture. Interacts with IGFBP6 (via C-terminal domain). Interacts with CLPB. Interacts with CD86 (via cytoplasmic domain); the interactions increases after priming with CD40. Interacts with AFG3L2. Interacts with DNAJC19. Interacts with AKT2; this interaction may be important for myogenic differentiation. Phosphorylated. Tyrosine phosphorylation is indirectly stimulated by IGFBP6.

It localises to the mitochondrion inner membrane. It is found in the cytoplasm. Its subcellular location is the nucleus. The protein resides in the cell membrane. Protein with pleiotropic attributes mediated in a cell-compartment- and tissue-specific manner, which include the plasma membrane-associated cell signaling functions, mitochondrial chaperone, and transcriptional co-regulator of transcription factors and sex steroid hormones in the nucleus. Functionally, in the mitochondria, together with PHB, forms large ring complexes (prohibitin complexes) in the inner mitochondrial membrane (IMM) and functions as a chaperone protein that stabilizes mitochondrial respiratory enzymes and maintains mitochondrial integrity in the IMM, which is required for mitochondrial morphogenesis, neuronal survival, and normal lifespan. The prohibitin complex, with DNAJC19, regulates cardiolipin remodeling and the protein turnover of OMA1 in a cardiolipin-binding manner. Also regulates cytochrome-c oxidase assembly (COX) and mitochondrial respiration. Binding to sphingoid 1-phosphate (SPP) modulates its regulator activity. Has a key role of mitophagy receptor involved in targeting mitochondria for autophagic degradation. Involved in mitochondrial-mediated antiviral innate immunity, activates RIG-I-mediated signal transduction and production of IFNB1 and pro-inflammatory cytokine IL6. Its function is as follows. In the nucleus, serves as transcriptional co-regulator. Acts as a mediator of transcriptional repression by nuclear hormone receptors via recruitment of histone deacetylases. Functions as an estrogen receptor (ER)-selective coregulator that potentiates the inhibitory activities of antiestrogens and represses the activity of estrogens. Competes with NCOA1 for modulation of ER transcriptional activity. In terms of biological role, in the plasma membrane, is involved in IGFBP6-induced cell migration. Cooperates with CD86 to mediate CD86-signaling in B lymphocytes that regulates the level of IgG1 produced through the activation of distal signaling intermediates. Upon CD40 engagement, required to activate NF-kappa-B signaling pathway via phospholipase C and protein kinase C activation. The polypeptide is Prohibitin-2 (PHB2) (Pongo abelii (Sumatran orangutan)).